Consider the following 473-residue polypeptide: RUN domain-containing protein 3B (473 aa).

The tract at residues 1 to 24 (MASRSLGGLSGIRGGGGGGGKKSL) is disordered. The segment covering 8–21 (GLSGIRGGGGGGGK) has biased composition (gly residues). The residue at position 13 (Arg-13) is an Omega-N-methylarginine. The RUN domain occupies 57-206 (DDSSPEFNNF…IDFSFCLKGE (150 aa)). Residues Ser-232 and Ser-233 each carry the phosphoserine modification. Residues 317-342 (AHKLEKEQLEYIIVELQDQLTVLKNN) are a coiled coil. Positions 399-422 (SLSQTSLDPGQSQEGDGKQDTLNV) are enriched in polar residues. Residues 399 to 428 (SLSQTSLDPGQSQEGDGKQDTLNVMSEGKE) form a disordered region.

The protein belongs to the RUNDC3 family. In terms of assembly, interacts with RAP2A. As to expression, isoform 2 is expressed at high levels in brain, thymus, ovary, testis, leukocyte, liver, small intestine and prostate. Isoform 1 is expressed in the brain, testis and adrenal gland. It is activated in tumorigenic breast cancer cell lines and in the primary tumor of breast cancer patients. Activation also correlates with metastatic lymph node invasion and can be detected in metastatic epithelial cells from the lymph nodes and in the bone marrow of patients.

This chain is RUN domain-containing protein 3B (RUNDC3B), found in Homo sapiens (Human).